Reading from the N-terminus, the 335-residue chain is DDRGK domain-containing protein 1 (335 aa).

Residues 1–6 (MGDTYS) are Lumenal-facing. The helical transmembrane segment at 7 to 27 (LVLVAGYLSIFLFIGAIGYFY) threads the bilayer. Topologically, residues 28 to 335 (LSKPRIPSSN…NNDQDPVDTN (308 aa)) are cytoplasmic. The interval 37–124 (NVNEQQQQQQ…GEDIGVVAPG (88 aa)) is disordered. Low complexity-rich tracts occupy residues 41 to 56 (QQQQQQQQQQQQQQPQ) and 91 to 103 (SSGSDSDNSTNSD). A compositionally biased stretch (acidic residues) spans 104 to 117 (NYDDDNGQEGEGED).

It belongs to the DDRGK1 family.

The protein resides in the endoplasmic reticulum membrane. Its function is as follows. Substrate adapter for ufmylation, the covalent attachment of the ubiquitin-like modifier UFM1 to substrate proteins. This Dictyostelium discoideum (Social amoeba) protein is DDRGK domain-containing protein 1.